A 283-amino-acid chain; its full sequence is Ribonuclease P protein subunit p38 (283 aa).

Ala-2 is subject to N-acetylalanine. Residues Ser-12, Ser-226, and Ser-235 each carry the phosphoserine modification.

It belongs to the eukaryotic ribosomal protein eL8 family. Component of nuclear RNase P and RNase MRP ribonucleoproteins. RNase P consists of a catalytic RNA moiety and about 10 protein subunits; POP1, POP4, POP5, POP7, RPP14, RPP21, RPP25, RPP30, RPP38 and RPP40. Within the RNase P complex, POP1, POP7 and RPP25 form the 'finger' subcomplex, POP5, RPP14, RPP40 and homodimeric RPP30 form the 'palm' subcomplex, and RPP21, POP4 and RPP38 form the 'wrist' subcomplex. All subunits of the RNase P complex interact with the catalytic RNA. Several subunits of RNase P are also part of the RNase MRP complex. RNase MRP consists of a catalytic RNA moiety and about 8 protein subunits; POP1, POP7, RPP25, RPP30, RPP38, RPP40 and possibly also POP4 and POP5.

It is found in the nucleus. The protein localises to the nucleolus. Its function is as follows. Component of ribonuclease P, a ribonucleoprotein complex that generates mature tRNA molecules by cleaving their 5'-ends. Also a component of the MRP ribonuclease complex, which cleaves pre-rRNA sequences. This Homo sapiens (Human) protein is Ribonuclease P protein subunit p38 (RPP38).